We begin with the raw amino-acid sequence, 215 residues long: uncharacterized protein (215 aa).

Residues serine 114, aspartate 162, and histidine 194 each act as charge relay system in the active site.

The protein belongs to the AB hydrolase superfamily. AB hydrolase 2 family.

This is an uncharacterized protein from Rickettsia prowazekii (strain Madrid E).